The chain runs to 664 residues: Peroxisomal acyl-coenzyme A oxidase 1 (664 aa).

Positions 135, 137, 138, 144, 177, 310, 330, 333, 401, and 422 each coordinate FAD. Glu-424 serves as the catalytic Proton acceptor. Asp-426 contributes to the FAD binding site. A disulfide bond links Cys-467 and Cys-576. The Microbody targeting signal motif lies at 662–664; it reads ARL.

The protein belongs to the acyl-CoA oxidase family. As to quaternary structure, homodimer. The cofactor is FAD. In terms of tissue distribution, expressed mainly in flowers and young seedlings. Lower expression in roots, leaves and bracts.

The protein localises to the peroxisome. The enzyme catalyses a 2,3-saturated acyl-CoA + O2 = a (2E)-enoyl-CoA + H2O2. Its function is as follows. Catalyzes the desaturation of both long- and medium-chain acyl-CoAs to 2-trans-enoyl-CoAs. Most active with C14-CoA. Activity on long-chain mono-unsaturated substrates is 40% higher than with the corresponding saturated substrates. Seems to be an important factor in the general metabolism of root tips. May be involved in the biosynthesis of jasmonic acid. The chain is Peroxisomal acyl-coenzyme A oxidase 1 from Arabidopsis thaliana (Mouse-ear cress).